Consider the following 780-residue polypeptide: uncharacterized protein (780 aa).

Residues 10 to 80 (NNNIIKLNIG…MRTGTFTLPY (71 aa)) form the BTB domain.

This is an uncharacterized protein from Dictyostelium discoideum (Social amoeba).